A 328-amino-acid polypeptide reads, in one-letter code: Malate dehydrogenase (328 aa).

12 to 18 (GAAGQIA) contributes to the NAD(+) binding site. Positions 93 and 99 each coordinate substrate. NAD(+) contacts are provided by residues Asn-106, Gln-113, and 130 to 132 (VGN). 2 residues coordinate substrate: Asn-132 and Arg-163. The Proton acceptor role is filled by His-188.

The protein belongs to the LDH/MDH superfamily. MDH type 2 family.

It catalyses the reaction (S)-malate + NAD(+) = oxaloacetate + NADH + H(+). In terms of biological role, catalyzes the reversible oxidation of malate to oxaloacetate. The chain is Malate dehydrogenase from Burkholderia lata (strain ATCC 17760 / DSM 23089 / LMG 22485 / NCIMB 9086 / R18194 / 383).